The sequence spans 328 residues: UPF0252 protein PF0978 (328 aa).

A helical membrane pass occupies residues 3 to 23; sequence VPLLILLFLVLTSGCIAPSTP.

It belongs to the UPF0252 family.

Its subcellular location is the membrane. This is UPF0252 protein PF0978 from Pyrococcus furiosus (strain ATCC 43587 / DSM 3638 / JCM 8422 / Vc1).